We begin with the raw amino-acid sequence, 132 residues long: Dehydratase CTB10 (132 aa).

An EthD domain is found at 21 to 117 (PDQSEEDHHN…IPDHFNFADM (97 aa)).

Belongs to the tpcK family.

It functions in the pathway mycotoxin biosynthesis. Its function is as follows. Dehydratase; part of the gene cluster that mediates the biosynthesis of cercosporin, a light-activated, non-host-selective toxin. The perylenequinone chromophore of cercosporin absorbs light energy to attain an electronically-activated triplet state and produces active oxygen species such as the hydroxyl radical, superoxide, hydrogen peroxide or singlet oxygen upon reaction with oxygen molecules. These reactive oxygen species cause damage to various cellular components including lipids, proteins and nucleic acids. The first step of cercosporin biosynthesis is performed by the polyketide synthase CTB1 which catalyzes the formation of nor-toralactone. The starter unit acyltransferase (SAT) domain of CTB1 initiates polyketide extension by the selective utilization of acetyl-CoA, which is elongated to the heptaketide in the beta-ketoacyl synthase (KS) domain by successive condensations with six malonyl units introduced by the malonyl acyltransferase (MAT) domain. The product template (PT) domain catalyzes C4-C9 and C2-C11 aldol cyclizations and dehydrations to a trihydroxynaphthalene, which is thought to be delivered to the thioesterase (TE) domain for product release. The bifunctional enzyme CTB3 then methylates nor-toralactone to toralactone before conducting an unusual oxidative aromatic ring opening. The O-methyltransferase CTB2 further methylates the nascent OH-6 of the CBT3 product, blocking further oxidation at this site before the reductase CTB6 reduces the 2-oxopropyl ketone at position C7, giving naphthalene. The FAD-dependent monooxygenase CTB5 in concert with the multicopper oxidase CTB12 are responsible for homodimerization of naphthalene with CTB7 installing the dioxepine moiety, finally producing cercosporin. The fasciclin domain-containing protein CTB11 might act with CTB5 and CTB12 whereas the roles of CTB9 and CTB10 have still to be elucidated. The sequence is that of Dehydratase CTB10 from Cercospora beticola (Sugarbeet leaf spot fungus).